We begin with the raw amino-acid sequence, 267 residues long: Acryloyl-CoA reductase electron transfer subunit gamma (267 aa).

In terms of assembly, heterohexadecamer; tetramer of tetramers. Each tetramer is composed of 2 alpha (AcrC), a beta (AcrA) and a gamma (AcrB) subunit.

The protein resides in the cytoplasm. Its function is as follows. Part of the ETF-acryloyl-CoA reductase complex involved in the pathway of L-alanine fermentation. The electron transfer flavoprotein (ETF) serves as a specific electron acceptor for acryloyl-CoA reductase. This chain is Acryloyl-CoA reductase electron transfer subunit gamma (acrB), found in Anaerotignum propionicum (Clostridium propionicum).